A 79-amino-acid polypeptide reads, in one-letter code: Adipokinetic hormone (79 aa).

A signal peptide spans 1–22; the sequence is MNPKSEVLIAAVLFMLLACVQC. A Pyrrolidone carboxylic acid modification is found at Gln23. Trp30 is subject to Tryptophan amide. The propeptide occupies 34–79; sequence SVGGAGPGTFFETQQGNCKTSNEMLLEIFRFVQSQAQLFLDCKHRE.

Belongs to the AKH/HRTH/RPCH family.

It is found in the secreted. In terms of biological role, probably causes a marked increase in hemolymph carbohydrate. This is Adipokinetic hormone (Akh) from Drosophila melanogaster (Fruit fly).